Reading from the N-terminus, the 177-residue chain is Large ribosomal subunit protein uL6 (177 aa).

This sequence belongs to the universal ribosomal protein uL6 family. As to quaternary structure, part of the 50S ribosomal subunit.

This protein binds to the 23S rRNA, and is important in its secondary structure. It is located near the subunit interface in the base of the L7/L12 stalk, and near the tRNA binding site of the peptidyltransferase center. The chain is Large ribosomal subunit protein uL6 from Herminiimonas arsenicoxydans.